The primary structure comprises 165 residues: MTQTSENVTWLTQEAYNKLKEELEYLTGPARTEISAKIAAAREEGDLRENGGYHAAKEEQGKQELRVRQLTQLLESAKVGEAPAADGVVAPGMVVTIAFDGDEDDTLTFLLASREYASSDIETYSPQSPLGSGVLGHKVGDDAQYELPNGKPASVRILKAEPYNG.

Positions A55 to K78 form a coiled coil.

Belongs to the GreA/GreB family.

Functionally, necessary for efficient RNA polymerase transcription elongation past template-encoded arresting sites. The arresting sites in DNA have the property of trapping a certain fraction of elongating RNA polymerases that pass through, resulting in locked ternary complexes. Cleavage of the nascent transcript by cleavage factors such as GreA or GreB allows the resumption of elongation from the new 3'terminus. GreA releases sequences of 2 to 3 nucleotides. This is Transcription elongation factor GreA from Streptomyces coelicolor (strain ATCC BAA-471 / A3(2) / M145).